Reading from the N-terminus, the 637-residue chain is Sodium-dependent phosphate transport protein 2A (637 aa).

Topologically, residues M1–K103 are cytoplasmic. 2 positions are modified to phosphoserine: S14 and S34. The chain crosses the membrane as a helical span at residues V104 to F125. Residues Q126 to N145 lie on the Extracellular side of the membrane. Residues P146–S163 traverse the membrane as a helical segment. The Cytoplasmic segment spans residues S164–T165. Residues S166 to I185 form a helical membrane-spanning segment. The Extracellular segment spans residues P186 to D345. Intrachain disulfides connect C225/C520 and C306/C334. N-linked (GlcNAc...) asparagine glycans are attached at residues N298 and N328. The chain crosses the membrane as a helical span at residues L346–V368. At K369 to M410 the chain is on the cytoplasmic side. Residues T411 to S434 traverse the membrane as a helical segment. Over I435–K464 the chain is Extracellular. A helical transmembrane segment spans residues L465–L485. The Cytoplasmic segment spans residues W486–W511. Residue T506 is modified to Phosphothreonine; by PKC. The helical transmembrane segment at F512–S532 threads the bilayer. Residues M533–Q537 are Extracellular-facing. A helical membrane pass occupies residues A538 to L559. At Q560–L637 the chain is on the cytoplasmic side. At S605 the chain carries Phosphoserine. T621 bears the Phosphothreonine mark. S623 is subject to Phosphoserine.

It belongs to the SLC34A transporter family. Interacts via its C-terminal region with NHERF4. Interacts with NHERF1. Interacts with TMEM174; regulates SLC34A1 internalization by PTH and FGF23. In terms of tissue distribution, kidney.

It localises to the apical cell membrane. Its subcellular location is the cell membrane. It carries out the reaction 3 Na(+)(out) + phosphate(out) = 3 Na(+)(in) + phosphate(in). Involved in actively transporting phosphate into cells via Na(+) cotransport in the renal brush border membrane. The cotransport has a Na(+):Pi stoichiometry of 3:1 and is electrogenic. The sequence is that of Sodium-dependent phosphate transport protein 2A from Mus musculus (Mouse).